A 666-amino-acid chain; its full sequence is Peptidase S41 family protein phomP1' (666 aa).

The N-terminal stretch at 1 to 27 is a signal peptide; it reads MSSFLVQTAVVRLFLLGVVFWFPFALS. N-linked (GlcNAc...) asparagine glycans are attached at residues Asn-70, Asn-214, and Asn-234. Positions 303 to 504 are peptidase S41 domain; the sequence is DVAVLQITSF…LLQAQGVRTV (202 aa). Residues Asn-555 and Asn-612 are each glycosylated (N-linked (GlcNAc...) asparagine).

Belongs to the peptidase S41A family.

It functions in the pathway mycotoxin biosynthesis. Peptidase S41 family protein; part of the gene cluster that mediates the biosynthesis of the phomopsins, a group of hexapeptide mycotoxins which infects lupins and causes lupinosis disease in livestock. Within the pathway, phomP1 and phomP1' are probably involved in the processing of the phomA and phomA' precursors. The pathway starts with the processing of the precursor phomA by several endopeptidases including kexin proteases as well as the cluster-specific S41 family peptidase phomP1 and the oligopeptidase phomG to produce 10 identical copies of the hexapeptide Tyr-Val-Ile-Pro-Ile-Asp. After being excised from the precursor peptide, the core peptides are cyclized and modified post-translationally by enzymes encoded within the gene cluster. The timing and order of proteolysis of the phomA precursor and PTMs are still unknown. Two tyrosinase-like enzymes, phomQ1 and phomQ2, catalyze the chlorination and hydroxylation of Tyr, respectively. PhomYb, is proposed to be involved in the construction of the macrocyclic structure. The other 4 ustYa family proteins may be involved in PTMs that generate the unique structure of phomopsin A. PhomYa is required for the hydroxylation of C-beta of Tyr. PhomYc, phomYd, and phomYe are responsible for the biosynthesis of 2,3-dehydroisoleucine (dIle), 2,3-dehydroaspartic acid (dAsp), and 3,4-dehydroproline (dPro), respectively. While dIle formation by phomYc is indispensable for the installation of dAsp by phomYd, the order of the other PTMs have not been elucidated yet. Most of the biosynthetic enzymes likely have broad substrate specificity, and thus, there might be a metabolic grid from a precursor to phomopsin A. The enzyme(s) responsible for the biosynthesis of 3,4-dehydrovaline (dVal) have also not been identified yet. Finally, phomM acts as an S-adenosylmethionine-dependent alpha-N-methyltransferase that catalyzes two successive N-methylation reactions, converting N-desmethyl-phomopsin A to phomopsin A and phomopsin A further to an N,N-dimethylated congener called phomopsin E. This chain is Peptidase S41 family protein phomP1', found in Diaporthe leptostromiformis (Lupinosis disease fungus).